We begin with the raw amino-acid sequence, 160 residues long: Phosphopantetheine adenylyltransferase (160 aa).

A substrate-binding site is contributed by S9. Residues 9–10 and H17 each bind ATP; that span reads SF. Substrate-binding residues include K41, T73, and R87. ATP is bound by residues 88-90, E98, and 123-129; these read GMR and YTFFSSS.

It belongs to the bacterial CoaD family. As to quaternary structure, homohexamer. The cofactor is Mg(2+).

Its subcellular location is the cytoplasm. The catalysed reaction is (R)-4'-phosphopantetheine + ATP + H(+) = 3'-dephospho-CoA + diphosphate. Its pathway is cofactor biosynthesis; coenzyme A biosynthesis; CoA from (R)-pantothenate: step 4/5. Reversibly transfers an adenylyl group from ATP to 4'-phosphopantetheine, yielding dephospho-CoA (dPCoA) and pyrophosphate. The protein is Phosphopantetheine adenylyltransferase of Roseiflexus sp. (strain RS-1).